A 106-amino-acid polypeptide reads, in one-letter code: uncharacterized protein (106 aa).

The protein localises to the mitochondrion. This is an uncharacterized protein from Arabidopsis thaliana (Mouse-ear cress).